Reading from the N-terminus, the 65-residue chain is Temporin-LK1 (65 aa).

A signal peptide spans 1–22 (MFTMKKSLLLLFFLGAINLPLC). The propeptide occupies 23-44 (QEERNAEEERRDGDDEGSVEVQ). Phenylalanine 63 carries the post-translational modification Phenylalanine amide.

Expressed by the skin glands.

The protein resides in the secreted. In terms of biological role, has antimicrobial activity against Gram-positive bacteria S.aureus ATCC 2592 (MIC=2.5 uM), S.aureus ATCC 43300 (MIC=2.5 uM) and B.subtilis (MIC=15.0 uM), against Gram-negative bacteria E.coli ML-35P (MIC=30.0 uM), P.aeruginosa PA01 (MIC=2.5 uM) and P.aeruginosa ATCC 27853 (MIC=2.5 uM) and against fungus C.albicans ATCC 2002 (MIC=5.0 uM). This chain is Temporin-LK1, found in Limnonectes kuhlii (Kuhl's Creek frog).